The primary structure comprises 387 residues: Tetratricopeptide repeat protein 4 (387 aa).

Met1 carries the N-acetylmethionine modification. A phosphoserine mark is found at Ser47 and Ser51. 3 TPR repeats span residues 79-112 (AKTYKDEGNDYFKEKDYKKAVISYTEGLKKKCAD), 117-150 (AVLYTNRAAAQYYLGNFRSALNDVTAARKLKPCH), and 151-184 (LKAIIRGALCHLELKHFAEAVNWCDEGLQIDAKE). Ser243 bears the Phosphoserine mark.

This sequence belongs to the TTC4 family. Interacts (via TPR repeats) with HSP90AB1. Interacts with HSPA8 and CDC6. Interacts with TBK1. Interacts with MSL1. Highly expressed in proliferating tissue and tumor cell lines but not in normal cell lines.

The protein resides in the nucleus. The protein localises to the nucleoplasm. It localises to the cytoplasm. In terms of biological role, may act as a co-chaperone for HSP90AB1. Promotes Sendai virus (SeV)-induced host cell innate immune responses. The protein is Tetratricopeptide repeat protein 4 (TTC4) of Homo sapiens (Human).